Here is a 391-residue protein sequence, read N- to C-terminus: Putative alpha-ketoglutarate-dependent sulfonate dioxygenase (391 aa).

His204 and Asp206 together coordinate Fe cation. 2-oxoglutarate contacts are provided by Thr231 and Trp338. Residue His353 coordinates Fe cation. 2-oxoglutarate-binding residues include Arg364 and Arg368.

This sequence belongs to the TfdA dioxygenase family. The cofactor is Fe(2+).

It participates in organosulfur degradation; alkanesulfonate degradation. Acts as an alpha-ketoglutarate-dependent dioxygenase active on sulfonates. The sequence is that of Putative alpha-ketoglutarate-dependent sulfonate dioxygenase from Schizosaccharomyces pombe (strain 972 / ATCC 24843) (Fission yeast).